The chain runs to 85 residues: UPF0297 protein LBA0418 (85 aa).

The protein belongs to the UPF0297 family.

This chain is UPF0297 protein LBA0418, found in Lactobacillus acidophilus (strain ATCC 700396 / NCK56 / N2 / NCFM).